Consider the following 361-residue polypeptide: Biotin synthase (361 aa).

A Radical SAM core domain is found at 83–308 (PEVEVEGIIS…RTILRYAGGR (226 aa)). 3 residues coordinate [4Fe-4S] cluster: cysteine 98, cysteine 102, and cysteine 105. [2Fe-2S] cluster contacts are provided by cysteine 141, cysteine 174, cysteine 233, and arginine 303.

It belongs to the radical SAM superfamily. Biotin synthase family. Homodimer. It depends on [4Fe-4S] cluster as a cofactor. [2Fe-2S] cluster serves as cofactor.

It carries out the reaction (4R,5S)-dethiobiotin + (sulfur carrier)-SH + 2 reduced [2Fe-2S]-[ferredoxin] + 2 S-adenosyl-L-methionine = (sulfur carrier)-H + biotin + 2 5'-deoxyadenosine + 2 L-methionine + 2 oxidized [2Fe-2S]-[ferredoxin]. It functions in the pathway cofactor biosynthesis; biotin biosynthesis; biotin from 7,8-diaminononanoate: step 2/2. Functionally, catalyzes the conversion of dethiobiotin (DTB) to biotin by the insertion of a sulfur atom into dethiobiotin via a radical-based mechanism. This Parafrankia sp. (strain EAN1pec) protein is Biotin synthase.